The sequence spans 153 residues: Riboflavin synthase (153 aa).

The protein belongs to the DMRL synthase family. In terms of assembly, homooligomer. Requires Mg(2+) as cofactor.

It catalyses the reaction 2 6,7-dimethyl-8-(1-D-ribityl)lumazine + H(+) = 5-amino-6-(D-ribitylamino)uracil + riboflavin. Its pathway is cofactor biosynthesis; riboflavin biosynthesis; riboflavin from 2-hydroxy-3-oxobutyl phosphate and 5-amino-6-(D-ribitylamino)uracil: step 2/2. Inhibited by EDTA. In terms of biological role, the relatively low activity of this enzyme suggested that 6,7-dimethyl-8-ribityllumazine might not be its natural substrate. This is Riboflavin synthase (ribC) from Methanothermobacter marburgensis (strain ATCC BAA-927 / DSM 2133 / JCM 14651 / NBRC 100331 / OCM 82 / Marburg) (Methanobacterium thermoautotrophicum).